The chain runs to 396 residues: Inositol polyphosphate multikinase (396 aa).

A compositionally biased stretch (low complexity) spans 1–13 (MAAEPPALRLRPP). A disordered region spans residues 1 to 22 (MAAEPPALRLRPPGSTGDSPPV). Residue alanine 2 is modified to N-acetylalanine. Phosphoserine is present on serine 19. Lysine 58 contacts ATP. Arginine 65 is a substrate binding site. Residues 114-116 (EDV) and aspartate 127 each bind ATP. Substrate is bound by residues lysine 129, 143–150 (KIQQQVSK), and glutamine 179. The Nuclear localization signal motif lies at 300-310 (RHRKLYAKKHQ). ATP is bound at residue aspartate 365.

The protein belongs to the inositol phosphokinase (IPK) family. Requires Mg(2+) as cofactor. Highly expressed in kidney, and at lower levels in hippocampus, brain cortex, cerebellum, heart and lung.

Its subcellular location is the nucleus. It carries out the reaction 1D-myo-inositol 1,4,5-trisphosphate + 2 ATP = 1D-myo-inositol 1,3,4,5,6-pentakisphosphate + 2 ADP + 2 H(+). The enzyme catalyses 1D-myo-inositol 1,3,4,6-tetrakisphosphate + ATP = 1D-myo-inositol 1,3,4,5,6-pentakisphosphate + ADP + H(+). The catalysed reaction is 1-octadecanoyl-2-(5Z,8Z,11Z,14Z)-eicosatetraenoyl-sn-glycero-3-phospho-1D-myo-inositol 4,5-bisphosphate + ATP = 1-octadecanoyl-2-(5Z,8Z,11Z,14Z-eicosatetraenoyl)-sn-glycero-3-phospho-(1D-myo-inositol 3,4,5-triphosphate) + ADP + H(+). It catalyses the reaction a 1,2-diacyl-sn-glycero-3-phospho-(1D-myo-inositol-4,5-bisphosphate) + ATP = a 1,2-diacyl-sn-glycero-3-phospho-(1D-myo-inositol-3,4,5-trisphosphate) + ADP + H(+). It carries out the reaction 1D-myo-inositol 1,4,5,6-tetrakisphosphate + ATP = 1D-myo-inositol 1,3,4,5,6-pentakisphosphate + ADP + H(+). It participates in phospholipid metabolism; phosphatidylinositol metabolism. Inositol phosphate kinase with a broad substrate specificity. Phosphorylates inositol 1,4,5-trisphosphate (Ins(1,4,5)P3) first to inositol 1,3,4,5-tetrakisphosphate and then to inositol 1,3,4,5,6-pentakisphosphate (Ins(1,3,4,5,6)P5). Phosphorylates inositol 1,3,4,6-tetrakisphosphate (Ins(1,3,4,6)P4). Phosphorylates inositol 1,4,5,6-tetrakisphosphate (Ins(1,4,5,6)P4). Phosphorylates glycero-3-phospho-1D-myo-inositol 4,5-bisphosphate to glycero-3-phospho-1D-myo-inositol 3,4,5-trisphosphate. Plays an important role in MLKL-mediated necroptosis via its role in the biosynthesis of inositol pentakisphosphate (InsP5) and inositol hexakisphosphate (InsP6). Binding of these highly phosphorylated inositol phosphates to MLKL mediates the release of an N-terminal auto-inhibitory region, leading to activation of the kinase. Essential for activated phospho-MLKL to oligomerize and localize to the cell membrane during necroptosis. Required for normal embryonic development, probably via its role in the biosynthesis of inositol 1,3,4,5,6-pentakisphosphate (Ins(1,3,4,5,6)P5) and inositol hexakisphosphate (InsP6). The chain is Inositol polyphosphate multikinase (Ipmk) from Rattus norvegicus (Rat).